Consider the following 129-residue polypeptide: Large ribosomal subunit protein bL17 (129 aa).

The protein belongs to the bacterial ribosomal protein bL17 family. In terms of assembly, part of the 50S ribosomal subunit. Contacts protein L32.

This is Large ribosomal subunit protein bL17 from Serratia proteamaculans (strain 568).